The following is a 170-amino-acid chain: ATP synthase subunit b, chloroplastic (170 aa).

Residues Ile15–Gly35 traverse the membrane as a helical segment.

It belongs to the ATPase B chain family. As to quaternary structure, F-type ATPases have 2 components, F(1) - the catalytic core - and F(0) - the membrane proton channel. F(1) has five subunits: alpha(3), beta(3), gamma(1), delta(1), epsilon(1). F(0) has four main subunits: a(1), b(1), b'(1) and c(10-14). The alpha and beta chains form an alternating ring which encloses part of the gamma chain. F(1) is attached to F(0) by a central stalk formed by the gamma and epsilon chains, while a peripheral stalk is formed by the delta, b and b' chains.

The protein localises to the plastid. It is found in the chloroplast thylakoid membrane. Its function is as follows. F(1)F(0) ATP synthase produces ATP from ADP in the presence of a proton or sodium gradient. F-type ATPases consist of two structural domains, F(1) containing the extramembraneous catalytic core and F(0) containing the membrane proton channel, linked together by a central stalk and a peripheral stalk. During catalysis, ATP synthesis in the catalytic domain of F(1) is coupled via a rotary mechanism of the central stalk subunits to proton translocation. In terms of biological role, component of the F(0) channel, it forms part of the peripheral stalk, linking F(1) to F(0). The sequence is that of ATP synthase subunit b, chloroplastic from Stigeoclonium helveticum (Green alga).